Consider the following 263-residue polypeptide: Lens fiber major intrinsic protein (263 aa).

The Cytoplasmic segment spans residues 1–12; that stretch reads MWELRSASFWRA. A helical transmembrane segment spans residues 13 to 30; sequence IFAEFFATLFYVFFGLGA. Over 31 to 40 the chain is Extracellular; it reads SLRWAPGPLH. A helical transmembrane segment spans residues 41-59; it reads VLQVALAFGLALATLVQAV. Residues 60 to 63 are Cytoplasmic-facing; the sequence is GHIS. Residues 64–76 constitute an intramembrane region (discontinuously helical); that stretch reads GAHVNPAVTFAFL. Positions 68 to 70 match the NPA 1 motif; it reads NPA. The Cytoplasmic portion of the chain corresponds to 77-85; sequence VGSQMSLLR. The helical transmembrane segment at 86-106 threads the bilayer; it reads AICYVVAQLLGAVAGAAVLYS. The Extracellular portion of the chain corresponds to 107 to 126; sequence VTPPAVRGNLALNTLHPGVS. The helical transmembrane segment at 127 to 147 threads the bilayer; sequence VGQATIVEIFLTLQFVLCIFA. The Cytoplasmic segment spans residues 148–157; that stretch reads TYDERRNGRL. A helical transmembrane segment spans residues 158–175; the sequence is GSVALAVGFSLTLGHLFG. The Extracellular segment spans residues 176–177; it reads MY. An intramembrane region (discontinuously helical) is located at residues 178-193; it reads YTGAGMNPARSFAPAI. The NPA 2 signature appears at 184–186; that stretch reads NPA. The Extracellular segment spans residues 194–200; sequence LTRNFTN. The chain crosses the membrane as a helical span at residues 201–218; it reads HWVYWVGPVIGAGLGSLL. Topologically, residues 219–263 are cytoplasmic; sequence YDFLLFPRLKSVSERLSILKGTRPSESNGQPEVTGEPVELKTQAL. Positions 227-237 are interaction with CALM; the sequence is LKSVSERLSIL. 3 positions are modified to phosphoserine: serine 235, serine 243, and serine 245. Residues 240–263 are disordered; that stretch reads TRPSESNGQPEVTGEPVELKTQAL.

This sequence belongs to the MIP/aquaporin (TC 1.A.8) family. Homotetramer; each monomer provides an independent water pore. Two homotetramers on opposing membranes can dimerize, forming a cell-cell junction. Interacts with CALM; the calcium-calmodulin/CALM complex interacts with the cytoplasmic domains of two aquaporins, leading to channel closure. Interacts with BFSP1 (via C-terminus); prevents calcium-dependent inhibition of the water channel activity. Subject to partial proteolytic cleavage in the eye lens core. Partial proteolysis promotes interactions between tetramers from adjoining membranes. Post-translationally, fatty acylated at Met-1 and Lys-238. The acyl modifications, in decreasing order of ion abundance, are: oleoyl (C18:1) &gt; palmitoyl (C16:0) &gt; stearoyl (C18:0) &gt; eicosenoyl (C20:1) &gt; dihomo-gamma-linolenoyl (C20:3) &gt; palmitoleoyl (C16:1) &gt; eicosadienoyl (C20:2). As to expression, detected in eye lens (at protein level).

It is found in the cell membrane. Its subcellular location is the cell junction. It catalyses the reaction H2O(in) = H2O(out). Its activity is regulated as follows. The water channel activity is inhibited by calcium through calmodulin/CALM. Its function is as follows. Aquaporins form homotetrameric transmembrane channels, with each monomer independently mediating water transport across the plasma membrane along its osmotic gradient. Specifically expressed in lens fiber cells, this aquaporin is crucial for maintaining lens water homeostasis and transparency. Beyond water permeability, it also acts as a cell-to-cell adhesion molecule, forming thin junctions between lens fiber cells that are essential for maintaining the ordered structure and transparency of the lens. This chain is Lens fiber major intrinsic protein, found in Ovis aries (Sheep).